The chain runs to 459 residues: XK-related protein 3 (459 aa).

A run of 10 helical transmembrane segments spans residues Phe35–Phe55, Ser68–Phe88, Ala97–Ile117, Ile169–Ile189, Leu199–Ile219, Val238–Ala258, Ser264–Trp284, Met300–Ser320, Ile345–Phe365, and Leu377–Tyr397.

This sequence belongs to the XK family. Expressed predominantly, if not exclusively, in testis.

The protein localises to the cell membrane. The polypeptide is XK-related protein 3 (XKR3) (Homo sapiens (Human)).